The primary structure comprises 451 residues: Ribulose bisphosphate carboxylase large chain (451 aa).

Residue lysine 5 is modified to N6,N6,N6-trimethyllysine. Substrate contacts are provided by asparagine 114 and threonine 164. Lysine 166 (proton acceptor) is an active-site residue. A substrate-binding site is contributed by lysine 168. Mg(2+) contacts are provided by lysine 192, aspartate 194, and glutamate 195. The residue at position 192 (lysine 192) is an N6-carboxylysine. The active-site Proton acceptor is histidine 285. Residues arginine 286, histidine 318, and serine 370 each coordinate substrate.

The protein belongs to the RuBisCO large chain family. Type I subfamily. Heterohexadecamer of 8 large chains and 8 small chains; disulfide-linked. The disulfide link is formed within the large subunit homodimers. Mg(2+) is required as a cofactor. The disulfide bond which can form in the large chain dimeric partners within the hexadecamer appears to be associated with oxidative stress and protein turnover.

The protein resides in the plastid. It is found in the chloroplast. It catalyses the reaction 2 (2R)-3-phosphoglycerate + 2 H(+) = D-ribulose 1,5-bisphosphate + CO2 + H2O. The enzyme catalyses D-ribulose 1,5-bisphosphate + O2 = 2-phosphoglycolate + (2R)-3-phosphoglycerate + 2 H(+). Functionally, ruBisCO catalyzes two reactions: the carboxylation of D-ribulose 1,5-bisphosphate, the primary event in carbon dioxide fixation, as well as the oxidative fragmentation of the pentose substrate in the photorespiration process. Both reactions occur simultaneously and in competition at the same active site. The chain is Ribulose bisphosphate carboxylase large chain from Aristea glauca.